Reading from the N-terminus, the 122-residue chain is Large ribosomal subunit protein eL22B (122 aa).

The protein belongs to the eukaryotic ribosomal protein eL22 family. Component of the large ribosomal subunit (LSU). Mature yeast ribosomes consist of a small (40S) and a large (60S) subunit. The 40S small subunit contains 1 molecule of ribosomal RNA (18S rRNA) and 33 different proteins (encoded by 57 genes). The large 60S subunit contains 3 rRNA molecules (25S, 5.8S and 5S rRNA) and 46 different proteins (encoded by 81 genes).

It is found in the cytoplasm. Its function is as follows. Component of the ribosome, a large ribonucleoprotein complex responsible for the synthesis of proteins in the cell. The small ribosomal subunit (SSU) binds messenger RNAs (mRNAs) and translates the encoded message by selecting cognate aminoacyl-transfer RNA (tRNA) molecules. The large subunit (LSU) contains the ribosomal catalytic site termed the peptidyl transferase center (PTC), which catalyzes the formation of peptide bonds, thereby polymerizing the amino acids delivered by tRNAs into a polypeptide chain. The nascent polypeptides leave the ribosome through a tunnel in the LSU and interact with protein factors that function in enzymatic processing, targeting, and the membrane insertion of nascent chains at the exit of the ribosomal tunnel. This Saccharomyces cerevisiae (strain ATCC 204508 / S288c) (Baker's yeast) protein is Large ribosomal subunit protein eL22B.